A 160-amino-acid chain; its full sequence is Large ribosomal subunit protein uL22c (160 aa).

It belongs to the universal ribosomal protein uL22 family. In terms of assembly, part of the 50S ribosomal subunit.

It localises to the plastid. It is found in the chloroplast. In terms of biological role, this protein binds specifically to 23S rRNA. Its function is as follows. The globular domain of the protein is located near the polypeptide exit tunnel on the outside of the subunit, while an extended beta-hairpin is found that lines the wall of the exit tunnel in the center of the 70S ribosome. The polypeptide is Large ribosomal subunit protein uL22c (rpl22) (Crucihimalaya wallichii (Rock-cress)).